Consider the following 377-residue polypeptide: tRNA-specific 2-thiouridylase MnmA (377 aa).

ATP is bound by residues 9–16 (AMSGGVDS) and leucine 35. The active-site Nucleophile is cysteine 105. The cysteines at positions 105 and 201 are disulfide-linked. Glycine 129 is a binding site for ATP. The interval 151–153 (KNQ) is interaction with tRNA. The Cysteine persulfide intermediate role is filled by cysteine 201. Positions 307–308 (RY) are interaction with tRNA.

This sequence belongs to the MnmA/TRMU family.

It is found in the cytoplasm. The catalysed reaction is S-sulfanyl-L-cysteinyl-[protein] + uridine(34) in tRNA + AH2 + ATP = 2-thiouridine(34) in tRNA + L-cysteinyl-[protein] + A + AMP + diphosphate + H(+). Its function is as follows. Catalyzes the 2-thiolation of uridine at the wobble position (U34) of tRNA, leading to the formation of s(2)U34. The chain is tRNA-specific 2-thiouridylase MnmA from Leptospira borgpetersenii serovar Hardjo-bovis (strain JB197).